Consider the following 732-residue polypeptide: Cyclopenase asqI (732 aa).

The Zn(2+) site is built by histidine 168, histidine 172, and histidine 200.

Belongs to the tyrosinase family. Zn(2+) is required as a cofactor.

The enzyme catalyses (-)-cyclopenine = viridicatin + methyl isocyanate + H(+). It carries out the reaction (-)-4'-methoxycyclopenine = 4'-methoxyviridicatin + methyl isocyanate + H(+). The protein operates within secondary metabolite biosynthesis. It participates in alkaloid biosynthesis. It functions in the pathway mycotoxin biosynthesis. Its function is as follows. Cyclopenase; part of the gene cluster that mediates the biosynthesis of the aspoquinolone mycotoxins. Within the pathway, the cyclopenase asqI catalyzes the conversion of 4'-methoxycyclopenin into 4'-methoxyviridicatin. Cyclopenin can also be converted into viridicatin by asqI. The first step of the pathway is catalyzed by the nonribosomal peptide synthetase asqK that condenses anthranilic acid and O-methyl-L-tyrosine to produce 4'-methoxycyclopeptin. 4'-methoxycyclopeptin is then converted to 4'-methoxydehydrocyclopeptin by the ketoglutarate-dependent dioxygenase asqJ. AsqJ also converts its first product 4'-methoxydehydrocyclopeptin to 4'-methoxycyclopenin. The following conversion of 4'-methoxycyclopenin into 4'-methoxyviridicatin is catalyzed by the cyclopenase asqI. 4'-methoxyviridicatin is the precursor of quinolone natural products, and is further converted to quinolinone B. The prenyltransferase asqH1 then catalyzes the canonical Friedel-Crafts alkylation of quinolinone B with dimethylallyl cation to yield dimethylallyl quinolone, which is subjected to FAD-dependent dehydrogenation by the FAD-linked oxidoreductase asqF to yield conjugated aryl diene. The delta(3') double bond then serves as the site of the second alkylation with DMAPP catalyzed by the prenyltransferase asqH2 to yield a carbenium ion intermediate, which can be attacked by H(2)O to yield a styrenyl quinolone containing a C3'-hydroxyprenyl chain. The FAD-dependent monooxygenase asqG performs epoxidation of the terminal C7'-C8' olefin. Finally, after dehydratation of the epoxide at C3 by asqC, the quinolone epoxide rearrangement protein asqO catalyzes an enzymatic 3-exo-tet cyclization to yield the cyclopropyl-THF ring system in aspoquinolone. The protein is Cyclopenase asqI of Emericella nidulans (strain FGSC A4 / ATCC 38163 / CBS 112.46 / NRRL 194 / M139) (Aspergillus nidulans).